We begin with the raw amino-acid sequence, 223 residues long: Large ribosomal subunit protein uL3 (223 aa).

It belongs to the universal ribosomal protein uL3 family. As to quaternary structure, part of the 50S ribosomal subunit. Forms a cluster with proteins L14 and L19.

Its function is as follows. One of the primary rRNA binding proteins, it binds directly near the 3'-end of the 23S rRNA, where it nucleates assembly of the 50S subunit. The protein is Large ribosomal subunit protein uL3 of Nocardioides sp. (strain ATCC BAA-499 / JS614).